Consider the following 312-residue polypeptide: L-lactate dehydrogenase (312 aa).

NAD(+) is bound by residues Val14, Asp35, and Tyr66. Residues Gln83, Arg90, and 122–125 (NPVD) each bind substrate. NAD(+)-binding positions include 120-122 (ASN) and Ser145. 150 to 153 (DSAR) is a binding site for substrate. His177 (proton acceptor) is an active-site residue. At Tyr220 the chain carries Phosphotyrosine. Thr229 lines the substrate pocket.

The protein belongs to the LDH/MDH superfamily. LDH family. Homotetramer.

The protein resides in the cytoplasm. The catalysed reaction is (S)-lactate + NAD(+) = pyruvate + NADH + H(+). Its pathway is fermentation; pyruvate fermentation to lactate; (S)-lactate from pyruvate: step 1/1. In terms of biological role, catalyzes the conversion of lactate to pyruvate. The polypeptide is L-lactate dehydrogenase (Mycoplasma pneumoniae (strain ATCC 29342 / M129 / Subtype 1) (Mycoplasmoides pneumoniae)).